A 159-amino-acid chain; its full sequence is Large ribosomal subunit protein bL17 (159 aa).

The span at 124-135 (EANRATRAAASK) shows a compositional bias: low complexity. The disordered stretch occupies residues 124–159 (EANRATRAAASKQAEEAKAEEAEATEAEAEETTEEK). Residues 145 to 159 (AEATEAEAEETTEEK) show a composition bias toward acidic residues.

It belongs to the bacterial ribosomal protein bL17 family. Part of the 50S ribosomal subunit. Contacts protein L32.

The sequence is that of Large ribosomal subunit protein bL17 from Corynebacterium aurimucosum (strain ATCC 700975 / DSM 44827 / CIP 107346 / CN-1) (Corynebacterium nigricans).